We begin with the raw amino-acid sequence, 1025 residues long: Adenylate-forming reductase 03009 (1025 aa).

The tract at residues 38-422 (FEFHAKSNPQ…LGRIDNQVKI (385 aa)) is adenylation (A) domain. AMP-binding positions include 332–333 (VT) and 412–415 (HLGR). The segment at 556–638 (SLGSTNTKIS…AILIWICVKK (83 aa)) is thiolation and peptide carrier (T) domain. A thioester reductase (TR) domain region spans residues 682–900 (FIRRTAARVY…PPTKLWVKGV (219 aa)). NADP(+) contacts are provided by residues 685 to 688 (RTAA), 769 to 771 (SAL), and Tyr840.

This sequence belongs to the adenylate-forming reductase family.

Its function is as follows. Adenylate-forming reductase, a natural product biosynthesis enzyme that resembles non-ribosomal peptide synthetases, yet serves to modify one substrate, rather than to condense two or more building blocks. The A-domain preferentially accepts L-serine, L-alanine and L-valine as substrates. The natural product of the enzyme is not yet known. This chain is Adenylate-forming reductase 03009, found in Coprinopsis cinerea (strain Okayama-7 / 130 / ATCC MYA-4618 / FGSC 9003) (Inky cap fungus).